Here is a 374-residue protein sequence, read N- to C-terminus: Alanine racemase (374 aa).

K34 serves as the catalytic Proton acceptor; specific for D-alanine. K34 is modified (N6-(pyridoxal phosphate)lysine). R138 is a binding site for substrate. The active-site Proton acceptor; specific for L-alanine is the Y265. A substrate-binding site is contributed by M313.

Belongs to the alanine racemase family. The cofactor is pyridoxal 5'-phosphate.

The catalysed reaction is L-alanine = D-alanine. The protein operates within amino-acid biosynthesis; D-alanine biosynthesis; D-alanine from L-alanine: step 1/1. Functionally, catalyzes the interconversion of L-alanine and D-alanine. May also act on other amino acids. This Hahella chejuensis (strain KCTC 2396) protein is Alanine racemase (alr).